The primary structure comprises 398 residues: Serine/threonine-protein kinase ppk23 (398 aa).

The 286-residue stretch at 74-359 (YEILEKIEEG…AKEALEHPYF (286 aa)) folds into the Protein kinase domain. ATP is bound by residues 80-88 (IEEGSYGIV) and Lys-103. Catalysis depends on Asp-198, which acts as the Proton acceptor. A disordered region spans residues 359–398 (FYESPRPKDPKFFPTFPSKAKGESKEKNVFQSFRSASPKK). The segment covering 387-398 (VFQSFRSASPKK) has biased composition (polar residues).

Belongs to the protein kinase superfamily. Ser/Thr protein kinase family.

It is found in the nucleus. It carries out the reaction L-seryl-[protein] + ATP = O-phospho-L-seryl-[protein] + ADP + H(+). The catalysed reaction is L-threonyl-[protein] + ATP = O-phospho-L-threonyl-[protein] + ADP + H(+). In Schizosaccharomyces pombe (strain 972 / ATCC 24843) (Fission yeast), this protein is Serine/threonine-protein kinase ppk23 (ppk23).